The following is a 243-amino-acid chain: Phosphoribosylaminoimidazole-succinocarboxamide synthase (243 aa).

It belongs to the SAICAR synthetase family.

The enzyme catalyses 5-amino-1-(5-phospho-D-ribosyl)imidazole-4-carboxylate + L-aspartate + ATP = (2S)-2-[5-amino-1-(5-phospho-beta-D-ribosyl)imidazole-4-carboxamido]succinate + ADP + phosphate + 2 H(+). The protein operates within purine metabolism; IMP biosynthesis via de novo pathway; 5-amino-1-(5-phospho-D-ribosyl)imidazole-4-carboxamide from 5-amino-1-(5-phospho-D-ribosyl)imidazole-4-carboxylate: step 1/2. The protein is Phosphoribosylaminoimidazole-succinocarboxamide synthase of Prochlorococcus marinus (strain MIT 9211).